Reading from the N-terminus, the 322-residue chain is Outer membrane protein assembly factor BamC (322 aa).

The first 22 residues, 1-22, serve as a signal peptide directing secretion; sequence MISLLAVAVLAGCSNPETRSQA.

It belongs to the BamC family. As to quaternary structure, part of the Bam complex.

The protein localises to the cell outer membrane. In terms of biological role, part of the outer membrane protein assembly complex, which is involved in assembly and insertion of beta-barrel proteins into the outer membrane. The sequence is that of Outer membrane protein assembly factor BamC from Oceanimonas sp. (strain GK1 / IBRC-M 10197).